We begin with the raw amino-acid sequence, 214 residues long: 3-isopropylmalate dehydratase small subunit (214 aa).

The protein belongs to the LeuD family. LeuD type 1 subfamily. In terms of assembly, heterodimer of LeuC and LeuD.

It catalyses the reaction (2R,3S)-3-isopropylmalate = (2S)-2-isopropylmalate. It functions in the pathway amino-acid biosynthesis; L-leucine biosynthesis; L-leucine from 3-methyl-2-oxobutanoate: step 2/4. In terms of biological role, catalyzes the isomerization between 2-isopropylmalate and 3-isopropylmalate, via the formation of 2-isopropylmaleate. The sequence is that of 3-isopropylmalate dehydratase small subunit from Desulforapulum autotrophicum (strain ATCC 43914 / DSM 3382 / VKM B-1955 / HRM2) (Desulfobacterium autotrophicum).